The following is a 198-amino-acid chain: dITP/XTP pyrophosphatase (198 aa).

Position 7-12 (7-12 (THNPHK)) interacts with substrate. Glu40 and Asp69 together coordinate Mg(2+). Asp69 (proton acceptor) is an active-site residue. Residues Thr70, 151 to 154 (FGYD), Lys174, and 179 to 180 (HR) contribute to the substrate site.

This sequence belongs to the HAM1 NTPase family. As to quaternary structure, homodimer. Requires Mg(2+) as cofactor.

It carries out the reaction XTP + H2O = XMP + diphosphate + H(+). The enzyme catalyses dITP + H2O = dIMP + diphosphate + H(+). The catalysed reaction is ITP + H2O = IMP + diphosphate + H(+). In terms of biological role, pyrophosphatase that catalyzes the hydrolysis of nucleoside triphosphates to their monophosphate derivatives, with a high preference for the non-canonical purine nucleotides XTP (xanthosine triphosphate), dITP (deoxyinosine triphosphate) and ITP. Seems to function as a house-cleaning enzyme that removes non-canonical purine nucleotides from the nucleotide pool, thus preventing their incorporation into DNA/RNA and avoiding chromosomal lesions. This Thermoanaerobacter sp. (strain X514) protein is dITP/XTP pyrophosphatase.